Here is a 334-residue protein sequence, read N- to C-terminus: Protein-glutamate methylesterase/protein-glutamine glutaminase 2 (334 aa).

The Response regulatory domain occupies 2 to 120; it reads NIGIVNDLPL…GAAGDTTKLL (119 aa). The residue at position 53 (aspartate 53) is a 4-aspartylphosphate. Positions 134–334 constitute a CheB-type methylesterase domain; sequence PGSSRLAGAA…AGELAALARI (201 aa). Residues serine 157, histidine 184, and aspartate 277 contribute to the active site.

The protein belongs to the CheB family. In terms of processing, phosphorylated by CheA. Phosphorylation of the N-terminal regulatory domain activates the methylesterase activity.

The protein resides in the cytoplasm. The enzyme catalyses [protein]-L-glutamate 5-O-methyl ester + H2O = L-glutamyl-[protein] + methanol + H(+). It catalyses the reaction L-glutaminyl-[protein] + H2O = L-glutamyl-[protein] + NH4(+). Its function is as follows. Involved in chemotaxis. Part of a chemotaxis signal transduction system that modulates chemotaxis in response to various stimuli. Catalyzes the demethylation of specific methylglutamate residues introduced into the chemoreceptors (methyl-accepting chemotaxis proteins or MCP) by CheR. Also mediates the irreversible deamidation of specific glutamine residues to glutamic acid. In Burkholderia orbicola (strain AU 1054), this protein is Protein-glutamate methylesterase/protein-glutamine glutaminase 2.